The following is a 281-amino-acid chain: Probable endonuclease 4 (281 aa).

Residues H78, H118, E149, D181, H184, H216, D229, H231, and E260 each coordinate Zn(2+).

Belongs to the AP endonuclease 2 family. Zn(2+) is required as a cofactor.

It carries out the reaction Endonucleolytic cleavage to 5'-phosphooligonucleotide end-products.. Its function is as follows. Endonuclease IV plays a role in DNA repair. It cleaves phosphodiester bonds at apurinic or apyrimidinic (AP) sites, generating a 3'-hydroxyl group and a 5'-terminal sugar phosphate. The chain is Probable endonuclease 4 from Thermoplasma acidophilum (strain ATCC 25905 / DSM 1728 / JCM 9062 / NBRC 15155 / AMRC-C165).